The chain runs to 147 residues: Large ribosomal subunit protein uL13 (147 aa).

Belongs to the universal ribosomal protein uL13 family. In terms of assembly, part of the 50S ribosomal subunit.

In terms of biological role, this protein is one of the early assembly proteins of the 50S ribosomal subunit, although it is not seen to bind rRNA by itself. It is important during the early stages of 50S assembly. This chain is Large ribosomal subunit protein uL13, found in Mycobacterium marinum (strain ATCC BAA-535 / M).